A 247-amino-acid chain; its full sequence is 14-3-3 protein zeta (247 aa).

This sequence belongs to the 14-3-3 family. In terms of assembly, homodimer.

Its subcellular location is the cytoplasm. Functionally, adapter protein implicated in the regulation of a large spectrum of both general and specialized signaling pathways. Binds to a large number of partners, usually by recognition of a phosphoserine or phosphothreonine motif. Binding generally results in the modulation of the activity of the binding partner. This Bombyx mori (Silk moth) protein is 14-3-3 protein zeta (14-3-3zeta).